The primary structure comprises 178 residues: Large ribosomal subunit protein uL6 (178 aa).

It belongs to the universal ribosomal protein uL6 family. As to quaternary structure, part of the 50S ribosomal subunit.

Its function is as follows. This protein binds to the 23S rRNA, and is important in its secondary structure. It is located near the subunit interface in the base of the L7/L12 stalk, and near the tRNA binding site of the peptidyltransferase center. The sequence is that of Large ribosomal subunit protein uL6 from Helicobacter hepaticus (strain ATCC 51449 / 3B1).